A 633-amino-acid polypeptide reads, in one-letter code: Kelch-like protein diablo (633 aa).

The interval 1–62 (MGDLPGSTGG…ARLSHTSEKH (62 aa)) is disordered. The span at 7 to 25 (STGGGGGVGGGGNGGGGPT) shows a compositional bias: gly residues. Residues 26 to 45 (IAGTNGNSTTGPGSSTGSTG) are compositionally biased toward low complexity. The BTB domain maps to 80-147 (CDVVLNVGGR…CYTAHIIVEE (68 aa)). The BACK domain maps to 182–284 (CLGIRAFADT…SPKFLVGTVG (103 aa)). Kelch repeat units follow at residues 331-377 (VLFA…VLND), 379-425 (LYAV…VLDG), 426-472 (FLYA…VLGG), 474-519 (LYAI…VFNN), 521-566 (IYAV…VVNG), and 567-613 (QLYA…VMRA).

Its pathway is protein modification; protein ubiquitination. Functionally, probable substrate-specific adapter of an E3 ubiquitin-protein ligase complex which mediates the ubiquitination and subsequent proteasomal degradation of target proteins. May have a role in synapse differentiation and growth. The sequence is that of Kelch-like protein diablo from Drosophila ananassae (Fruit fly).